The chain runs to 402 residues: Propionate kinase (402 aa).

Residues N11 and K18 each contribute to the ATP site. N11 contacts Mg(2+). Residue R86 participates in substrate binding. Catalysis depends on D143, which acts as the Proton donor/acceptor. Residues H175, 203–207, 278–280, and 326–330 contribute to the ATP site; these read HLGNG, DLR, and GIGEN.

The protein belongs to the acetokinase family. TdcD subfamily. Homodimer. The cofactor is Mg(2+).

The catalysed reaction is propanoate + ATP = propanoyl phosphate + ADP. Its pathway is amino-acid degradation; L-threonine degradation via propanoate pathway; propanoate from L-threonine: step 4/4. Catalyzes the conversion of propionyl phosphate and ADP to propionate and ATP. The polypeptide is Propionate kinase (Edwardsiella piscicida).